A 461-amino-acid polypeptide reads, in one-letter code: Homocitrate synthase (461 aa).

In terms of domain architecture, Pyruvate carboxyltransferase spans 4 to 259 (VGILDSTLRE…IEVVKLDKLQ (256 aa)). Residue Arg-12 coordinates 2-oxoglutarate. Glu-13 is a Mg(2+) binding site. His-76, Arg-136, and Thr-170 together coordinate 2-oxoglutarate. The Mg(2+) site is built by His-198 and His-200. The Proton acceptor role is filled by His-292.

It belongs to the alpha-IPM synthase/homocitrate synthase family. Homocitrate synthase LYS20/LYS21 subfamily. Requires Mg(2+) as cofactor. The cofactor is Mn(2+).

The enzyme catalyses acetyl-CoA + 2-oxoglutarate + H2O = (2R)-homocitrate + CoA + H(+). It functions in the pathway amino-acid biosynthesis; L-lysine biosynthesis via AAA pathway; L-alpha-aminoadipate from 2-oxoglutarate: step 1/5. In terms of biological role, catalyzes the aldol-type condensation of 2-oxoglutarate with acetyl-CoA to yield homocitrate. Carries out the first step of the alpha-aminoadipate (AAA) lysine biosynthesis pathway. The chain is Homocitrate synthase from Saccharolobus islandicus (strain Y.N.15.51 / Yellowstone #2) (Sulfolobus islandicus).